The sequence spans 404 residues: Retrotransposable element SLACS 45 kDa protein (404 aa).

Composition is skewed to polar residues over residues 1–11 and 29–41; these read MVRNLRSSEPQ and PALNLQWPGQKQV. Disordered stretches follow at residues 1 to 62, 86 to 111, 134 to 251, 317 to 341, and 369 to 404; these read MVRN…NTSI, KKAAHSPLKTKPVNKEGNRKKYGRPP, LGKG…KKGA, CRQQHPGGPPDSLHPDNNRESGAVS, and PKLPVPEQGDYPNARSGIGTGAPHSPHHCDRSAGPP. Positions 98–111 are enriched in basic and acidic residues; that stretch reads VNKEGNRKKYGRPP. Positions 141 to 151 are enriched in polar residues; sequence TAHTKSNQSRV. The C2H2-type zinc finger occupies 300–321; it reads CPVCGFAHPEETITVTHCRQQH. Residues 395–404 are compositionally biased toward basic and acidic residues; that stretch reads HHCDRSAGPP.

This Trypanosoma brucei gambiense protein is Retrotransposable element SLACS 45 kDa protein.